The sequence spans 159 residues: SsrA-binding protein (159 aa).

A compositionally biased stretch (basic and acidic residues) spans 138–153 (KREDGKDKDWSREKER). The disordered stretch occupies residues 138–159 (KREDGKDKDWSREKERLMKHKA).

The protein belongs to the SmpB family.

Its subcellular location is the cytoplasm. Functionally, required for rescue of stalled ribosomes mediated by trans-translation. Binds to transfer-messenger RNA (tmRNA), required for stable association of tmRNA with ribosomes. tmRNA and SmpB together mimic tRNA shape, replacing the anticodon stem-loop with SmpB. tmRNA is encoded by the ssrA gene; the 2 termini fold to resemble tRNA(Ala) and it encodes a 'tag peptide', a short internal open reading frame. During trans-translation Ala-aminoacylated tmRNA acts like a tRNA, entering the A-site of stalled ribosomes, displacing the stalled mRNA. The ribosome then switches to translate the ORF on the tmRNA; the nascent peptide is terminated with the 'tag peptide' encoded by the tmRNA and targeted for degradation. The ribosome is freed to recommence translation, which seems to be the essential function of trans-translation. The protein is SsrA-binding protein of Pseudoalteromonas translucida (strain TAC 125).